A 176-amino-acid chain; its full sequence is Calcineurin subunit B type 2 (176 aa).

Gly-2 carries the N-myristoyl glycine lipid modification. EF-hand domains are found at residues 18 to 53 (DEIKRLGRSFKKMDLDKSGSLSVDEFMSLPELQQNP), 57 to 85 (RVIDIFDTDGNGEVDFREFIVGTSQFSVK), 87 to 122 (DEEQKLRFAFRIYDMDNDGFISNGELFQVLKMMVGN), and 128 to 163 (QLQQLVDKSILVLDKDGDGRISFEEFRDVVRTMEIH). 14 residues coordinate Ca(2+): Asp-31, Asp-33, Ser-35, Ser-37, Glu-42, Asp-63, Asp-65, Asn-67, Glu-69, Glu-74, Asp-100, Asp-102, Asp-104, and Glu-111. The segment at 131–136 (QLVDKS) is calcineurin A binding. Ca(2+)-binding residues include Asp-141, Asp-143, Asp-145, Arg-147, and Glu-152.

The protein belongs to the calcineurin regulatory subunit family. As to quaternary structure, forms a complex composed of a calmodulin-dependent catalytic subunit (also known as calcineurin A) and a regulatory Ca(2+)-binding subunit (also known as calcineurin B). There are three catalytic subunits, each encoded by a separate gene (PPP3CA, PPP3CB, and PPP3CC) and two regulatory subunits which are also encoded by separate genes (PPP3R1 and PPP3R2). Interacts with SPATA33 (via PQIIIT motif). In terms of tissue distribution, testis specific.

It is found in the mitochondrion. Its function is as follows. Regulatory subunit of calcineurin, a calcium-dependent, calmodulin stimulated protein phosphatase. Confers calcium sensitivity. The chain is Calcineurin subunit B type 2 (Ppp3r2) from Rattus norvegicus (Rat).